The sequence spans 419 residues: Mitogen-activated protein kinase pmk-2 (419 aa).

The Protein kinase domain occupies 49 to 350; that stretch reads YNSLKPLGEG…VSSALRHDYL (302 aa). Residues 55 to 63 and lysine 78 each bind ATP; that span reads LGEGAYGVV. Catalysis depends on aspartate 210, which acts as the Proton acceptor. Threonine 222 is subject to Phosphothreonine. The TXY signature appears at 222-224; the sequence is TGY. Tyrosine 224 carries the post-translational modification Phosphotyrosine.

The protein belongs to the protein kinase superfamily. CMGC Ser/Thr protein kinase family. MAP kinase subfamily. Requires Mg(2+) as cofactor. Post-translationally, dually phosphorylated on Thr-222 and Tyr-224, which activates the enzyme.

The protein localises to the cytoplasm. It carries out the reaction L-seryl-[protein] + ATP = O-phospho-L-seryl-[protein] + ADP + H(+). The catalysed reaction is L-threonyl-[protein] + ATP = O-phospho-L-threonyl-[protein] + ADP + H(+). Activated by phosphorylation on threonine and tyrosine. Inhibited by pyridinyl-imidazole related compounds. Responds to activation by environmental stress and pro-inflammatory cytokines by phosphorylating downstream targets. In Caenorhabditis elegans, this protein is Mitogen-activated protein kinase pmk-2 (pmk-2).